A 334-amino-acid polypeptide reads, in one-letter code: D-fructose 1,6-bisphosphatase class 2/sedoheptulose 1,7-bisphosphatase (334 aa).

4 residues coordinate Mn(2+): D33, E57, D85, and E88. Substrate-binding positions include 88-90 (EGT), Y119, 164-166 (RAR), and 186-188 (DGD). E213 is a Mn(2+) binding site.

The protein belongs to the FBPase class 2 family. In terms of assembly, homotetramer. It depends on Mn(2+) as a cofactor.

The enzyme catalyses beta-D-fructose 1,6-bisphosphate + H2O = beta-D-fructose 6-phosphate + phosphate. It catalyses the reaction D-sedoheptulose 1,7-bisphosphate + H2O = D-sedoheptulose 7-phosphate + phosphate. The protein operates within carbohydrate biosynthesis; Calvin cycle. Functionally, catalyzes the hydrolysis of fructose 1,6-bisphosphate (Fru 1,6-P2) and sedoheptulose 1,7-bisphosphate (Sed 1,7-P2) to fructose 6-phosphate and sedoheptulose 7-phosphate, respectively. This is D-fructose 1,6-bisphosphatase class 2/sedoheptulose 1,7-bisphosphatase from Prochlorococcus marinus (strain MIT 9303).